Reading from the N-terminus, the 588-residue chain is Protein POF1B (588 aa).

2 coiled-coil regions span residues 332 to 442 and 502 to 530; these read STFS…VSET and LHEL…RQEI.

In terms of assembly, interacts with nonmuscle actin.

The protein localises to the cell junction. It is found in the tight junction. Functionally, plays a key role in the organization of epithelial monolayers by regulating the actin cytoskeleton. May be involved in ovary development. The chain is Protein POF1B (POF1B) from Pongo abelii (Sumatran orangutan).